The sequence spans 258 residues: Small ribosomal subunit protein mS40 (258 aa).

Residues 1 to 35 constitute a mitochondrion transit peptide; the sequence is MAASVLNTVLRRLPMLSLFRGSHRVQVPLQTLCTK. A phosphoserine mark is found at S38 and S49. The segment at 214–258 is disordered; the sequence is SRLRRLYQGHLQEESGPPPESMPKMPPRTPAEASSTGQTGPQSAL. Over residues 229-242 the composition is skewed to pro residues; sequence GPPPESMPKMPPRT. Positions 245–258 are enriched in polar residues; sequence EASSTGQTGPQSAL.

Belongs to the bacterial ribosomal protein bS18 family. Mitochondrion-specific ribosomal protein mS40 subfamily. Component of the mitochondrial small ribosomal subunit (mt-SSU). Mature mammalian 55S mitochondrial ribosomes consist of a small (28S) and a large (39S) subunit. The 28S small subunit contains a 12S ribosomal RNA (12S mt-rRNA) and 30 different proteins. The 39S large subunit contains a 16S rRNA (16S mt-rRNA), a copy of mitochondrial valine transfer RNA (mt-tRNA(Val)), which plays an integral structural role, and 52 different proteins. mS40 has a zinc binding site.

It localises to the mitochondrion. The chain is Small ribosomal subunit protein mS40 (MRPS18B) from Homo sapiens (Human).